The chain runs to 453 residues: tRNA modification GTPase MnmE (453 aa).

Residues arginine 22, glutamate 79, and lysine 119 each coordinate (6S)-5-formyl-5,6,7,8-tetrahydrofolate. A TrmE-type G domain is found at 215–376 (GMKVVIAGRP…LREHLKACMG (162 aa)). A K(+)-binding site is contributed by asparagine 225. Residues 225-230 (NAGKSS), 244-250 (TEIAGTT), 269-272 (DTAG), and 334-337 (NKAD) each bind GTP. Serine 229 serves as a coordination point for Mg(2+). Residues threonine 244, isoleucine 246, and threonine 249 each coordinate K(+). Position 250 (threonine 250) interacts with Mg(2+). A (6S)-5-formyl-5,6,7,8-tetrahydrofolate-binding site is contributed by lysine 453.

This sequence belongs to the TRAFAC class TrmE-Era-EngA-EngB-Septin-like GTPase superfamily. TrmE GTPase family. As to quaternary structure, homodimer. Heterotetramer of two MnmE and two MnmG subunits. The cofactor is K(+).

It localises to the cytoplasm. Its function is as follows. Exhibits a very high intrinsic GTPase hydrolysis rate. Involved in the addition of a carboxymethylaminomethyl (cmnm) group at the wobble position (U34) of certain tRNAs, forming tRNA-cmnm(5)s(2)U34. The protein is tRNA modification GTPase MnmE of Aeromonas salmonicida (strain A449).